A 226-amino-acid polypeptide reads, in one-letter code: Transcription factor bHLH115 (226 aa).

Residues 66-117 (TGSNSKACREKQRRDRLNDKFTELSSVLEPGRTPKTDKVAIINDAIRMVNQA) form the bHLH domain.

As to quaternary structure, homodimer. Interacts with BTS and BHLH47/PYE.

The protein resides in the nucleus. This is Transcription factor bHLH115 (BHLH115) from Arabidopsis thaliana (Mouse-ear cress).